The chain runs to 303 residues: Lipase chaperone (303 aa).

Residues threonine 7–aspartate 23 traverse the membrane as a helical segment.

It belongs to the lipase chaperone family.

It localises to the cell inner membrane. In terms of biological role, may be involved in the folding of the extracellular lipase during its passage through the periplasm. The sequence is that of Lipase chaperone (lifO) from Chromobacterium violaceum (strain ATCC 12472 / DSM 30191 / JCM 1249 / CCUG 213 / NBRC 12614 / NCIMB 9131 / NCTC 9757 / MK).